A 210-amino-acid polypeptide reads, in one-letter code: Large ribosomal subunit protein mL57 (210 aa).

The transit peptide at 1–59 directs the protein to the mitochondrion; that stretch reads MLTRHCNRLGLQIENKFVFRSSSWNCVRRIGKIACNENKYRYEMTSTEEDIDSFFSRVF.

This sequence belongs to the ribonuclease III family. Mitochondrion-specific ribosomal protein mL57 subfamily. In terms of assembly, component of the mitochondrial large ribosomal subunit (mt-LSU). Mature yeast 74S mitochondrial ribosomes consist of a small (37S) and a large (54S) subunit. The 37S small subunit contains a 15S ribosomal RNA (15S mt-rRNA) and at least 32 different proteins. The 54S large subunit contains a 21S rRNA (21S mt-rRNA) and at least 45 different proteins. mL57 forms a heterodimer with mL44 and stabilizes rRNA expansion segments 1/2 at a membrane-facing protuberance close to the point of attachment of the ribosome to the translocon in the membrane.

Its subcellular location is the mitochondrion. Its function is as follows. Component of the mitochondrial ribosome (mitoribosome), a dedicated translation machinery responsible for the synthesis of mitochondrial genome-encoded proteins, including at least some of the essential transmembrane subunits of the mitochondrial respiratory chain. The mitoribosomes are attached to the mitochondrial inner membrane and translation products are cotranslationally integrated into the membrane. In Schizosaccharomyces pombe (strain 972 / ATCC 24843) (Fission yeast), this protein is Large ribosomal subunit protein mL57 (mrp15).